A 352-amino-acid polypeptide reads, in one-letter code: Protein MGF 360-16R (352 aa).

Belongs to the asfivirus MGF 360 family.

In terms of biological role, plays a role in virus cell tropism, and may be required for efficient virus replication in macrophages. The sequence is that of Protein MGF 360-16R from African swine fever virus (isolate Warthog/Namibia/Wart80/1980) (ASFV).